A 429-amino-acid polypeptide reads, in one-letter code: Serine hydroxymethyltransferase (429 aa).

A (6S)-5,6,7,8-tetrahydrofolate-binding site is contributed by 120-122 (GHI). Lysine 226 carries the post-translational modification N6-(pyridoxal phosphate)lysine.

It belongs to the SHMT family. Homodimer. Pyridoxal 5'-phosphate is required as a cofactor.

Its subcellular location is the cytoplasm. Its pathway is amino-acid biosynthesis; glycine biosynthesis; glycine from L-serine: step 1/1. Catalyzes the reversible interconversion of serine and glycine with a modified folate serving as the one-carbon carrier. Also exhibits a pteridine-independent aldolase activity toward beta-hydroxyamino acids, producing glycine and aldehydes, via a retro-aldol mechanism. This chain is Serine hydroxymethyltransferase, found in Pyrobaculum arsenaticum (strain DSM 13514 / JCM 11321 / PZ6).